Here is a 1596-residue protein sequence, read N- to C-terminus: Transcription factor Zelda (1596 aa).

Disordered regions lie at residues Met-1–Gln-143, Ser-209–Ala-273, and Thr-490–Pro-530. Positions Ala-13–Asp-24 are enriched in low complexity. Gly residues predominate over residues Ser-25 to Gly-53. Residues Asn-60–Asn-72 show a composition bias toward polar residues. Low complexity-rich tracts occupy residues Gln-73–Gln-123 and Ser-226–Gly-267. Residues Gly-501–Arg-518 show a composition bias toward gly residues. A C2H2-type 1 zinc finger spans residues Tyr-552–His-576. Disordered regions lie at residues Asn-578 to Ala-813, Glu-825 to Leu-945, Gly-1017 to Thr-1074, and Gln-1252 to Pro-1322. A compositionally biased stretch (low complexity) spans Arg-610 to Gln-634. Over residues Pro-635–Pro-653 the composition is skewed to pro residues. Residues Tyr-656–Gly-668 show a composition bias toward gly residues. The span at Ser-673–Thr-682 shows a compositional bias: polar residues. Low complexity-rich tracts occupy residues Gln-683 to Tyr-709 and Asn-719 to Ser-753. Over residues Pro-768–Met-781 the composition is skewed to polar residues. Low complexity predominate over residues Thr-796–Ala-813. The span at Thr-830–His-840 shows a compositional bias: basic residues. Over residues Ser-849–Thr-858 the composition is skewed to low complexity. The segment covering Gln-864–His-877 has biased composition (basic and acidic residues). Residues His-879 to Pro-916 are compositionally biased toward low complexity. Residues Ser-904–Asn-1297 are transactivation activation domain (TAD). Residues Arg-921–Thr-932 show a composition bias toward polar residues. The segment covering Thr-933–Met-944 has biased composition (pro residues). Residues Gln-1019–Gln-1036 show a composition bias toward basic and acidic residues. Composition is skewed to low complexity over residues Leu-1037 to Ser-1062 and Gln-1252 to Gln-1275. 2 stretches are compositionally biased toward polar residues: residues Ile-1276–Gln-1286 and Ser-1309–Pro-1322. Residues Ile-1326–His-1349 form a C2H2-type 2 zinc finger. Residues Phe-1355–Arg-1378 form a C2H2-type 3; degenerate zinc finger. C2H2-type zinc fingers lie at residues His-1384–His-1407 and His-1413–His-1435.

In terms of tissue distribution, zygotically expressed in the developing embryonic germ layers, nervous system, imaginal disk primordia and in larval wing and eye disks. As to expression, detected in the germline cells of the ovary, in unfertilized eggs and throughout early development. Later, it becomes mostly restricted to the nervous system and specific head regions. Also expressed in imaginal wing disks in third instar larvae.

The protein localises to the nucleus. The protein resides in the chromosome. In terms of biological role, transcription factor required for zygotic genome activation (ZGA), a critical event in early embryonic development during which the developmental control passes from maternally provided mRNAs to the expression of the zygotic genome after fertilization. Binds to regulatory DNA sequences containing a 5'-CAGGTAG-3' sequence motif, which are highly enriched among developmental enhancers. Within 1 hour into development, or by the embryo's 8th nuclear cycle, binds the majority of its motifs genome-wide. Zelda-binding promotes nucleosome depletion and chromatin accessibility, thereby facilitating the binding of patterning transcription factors, including the binding of the dorsoventral patterning transcription factors dorsal (dl) and twist (twi), and the anteroposterior patterning transcription factors bicoid (bcd) and caudal (cad). Promotes the activity of patterning transcription factors, such as bcd and dl, by lowering the concentration threshold required for transcriptional activation. Required both for the earliest (minor) and major waves of transcription during ZGA. Also involved in maternal mRNA clearance during the maternal-to-zygote transition by promoting expression of microRNAs (miRNAs), such as miR-1, miR-9a and miR-309, which mediate degradation of maternally-loaded RNAs. Also involved in post-blastoderm development: nvolved in nervous system development by maintaining neuroblasts in an undifferentiated state and equired for wing disk development. Its function is as follows. Constitutes the main isoform expressed throughout development. Transcription factor required for zygotic genome activation (ZGA). Acts as a dominant negative inhibitor of transcription factor activity of isoform A. This chain is Transcription factor Zelda, found in Drosophila melanogaster (Fruit fly).